The sequence spans 493 residues: Cobyric acid synthase (493 aa).

The 187-residue stretch at 255–441 (ELEIAVLRLP…LHGLLENGRW (187 aa)) folds into the GATase cobBQ-type domain. The active-site Nucleophile is C336. The active site involves H433.

Belongs to the CobB/CobQ family. CobQ subfamily.

Its pathway is cofactor biosynthesis; adenosylcobalamin biosynthesis. Its function is as follows. Catalyzes amidations at positions B, D, E, and G on adenosylcobyrinic A,C-diamide. NH(2) groups are provided by glutamine, and one molecule of ATP is hydrogenolyzed for each amidation. This is Cobyric acid synthase from Synechococcus sp. (strain RCC307).